The primary structure comprises 637 residues: Chaperone protein HtpG (637 aa).

An a; substrate-binding region spans residues 1-338; the sequence is MMELKMHNVK…SPDLPLNISR (338 aa). The tract at residues 339–558 is b; the sequence is ETLQNNRVVE…EGAMDLRMER (220 aa). The interval 493–512 is disordered; that stretch reads KFSPEEKDKENKSDEERAEG. The c stretch occupies residues 559–637; sequence FLREQNQLNY…LNNLLGKVII (79 aa).

The protein belongs to the heat shock protein 90 family. As to quaternary structure, homodimer.

The protein localises to the cytoplasm. Functionally, molecular chaperone. Has ATPase activity. The sequence is that of Chaperone protein HtpG from Wolbachia sp. subsp. Brugia malayi (strain TRS).